The sequence spans 304 residues: Coenzyme PQQ synthesis protein B (304 aa).

It belongs to the PqqB family.

It participates in cofactor biosynthesis; pyrroloquinoline quinone biosynthesis. Its function is as follows. May be involved in the transport of PQQ or its precursor to the periplasm. This chain is Coenzyme PQQ synthesis protein B, found in Pseudomonas aeruginosa (strain UCBPP-PA14).